The primary structure comprises 229 residues: Aminodeoxyfutalosine nucleosidase (229 aa).

The Proton acceptor role is filled by glutamate 13. Residues glycine 79, isoleucine 153, and methionine 173 to glutamate 174 each bind substrate. Residue aspartate 197 is the Proton donor of the active site.

This sequence belongs to the PNP/UDP phosphorylase family. In terms of assembly, homodimer.

The catalysed reaction is 6-amino-6-deoxyfutalosine + H2O = dehypoxanthine futalosine + adenine. It catalyses the reaction S-adenosyl-L-homocysteine + H2O = S-(5-deoxy-D-ribos-5-yl)-L-homocysteine + adenine. It carries out the reaction S-methyl-5'-thioadenosine + H2O = 5-(methylsulfanyl)-D-ribose + adenine. The enzyme catalyses 5'-deoxyadenosine + H2O = 5-deoxy-D-ribose + adenine. The protein operates within quinol/quinone metabolism; menaquinone biosynthesis. Its pathway is amino-acid biosynthesis; L-methionine biosynthesis via salvage pathway; S-methyl-5-thio-alpha-D-ribose 1-phosphate from S-methyl-5'-thioadenosine (hydrolase route): step 1/2. Catalyzes the direct conversion of aminodeoxyfutalosine (AFL) into dehypoxanthine futalosine (DHFL) and adenine via the hydrolysis of the N-glycosidic bond; this reaction seems to represent an essential step in the menaquinone biosynthesis pathway in Campylobacter species. Also catalyzes the hydrolysis of 5'-methylthioadenosine (MTA) to adenine and 5'-methylthioribose. Can also probably use S-adenosylhomocysteine (SAH) as substrate, leading to adenine and S-ribosylhomocysteine. These other activities highlight the tremendous versatility of the enzyme, which also plays key roles in S-adenosylmethionine recycling and in the biosynthesis of the quorum-sensing molecule autoinducer-2. Shows negligible activity with futalosine (FL) as substrate. The protein is Aminodeoxyfutalosine nucleosidase (pfs) of Campylobacter jejuni subsp. jejuni serotype O:2 (strain ATCC 700819 / NCTC 11168).